The primary structure comprises 813 residues: Immunoglobulin superfamily DCC subclass member 3 (813 aa).

The tract at residues 1-21 (MAEPRTASPRRLPALRRPGFL) is disordered. The signal sequence occupies residues 1–47 (MAEPRTASPRRLPALRRPGFLPPLLPPPPPPLLLLLLLLPLPAPSLG). The segment covering 9-19 (PRRLPALRRPG) has biased composition (low complexity). Ig-like C2-type domains lie at 49–151 (GHSA…ATMS), 151–232 (SDFH…VRVS), 250–333 (PTIL…RTAQ), and 341–428 (PAEF…ARLT). Cystine bridges form between cysteine 75/cysteine 129 and cysteine 172/cysteine 221. Asparagine 105 carries N-linked (GlcNAc...) asparagine glycosylation. Residue asparagine 258 is glycosylated (N-linked (GlcNAc...) asparagine). 2 disulfide bridges follow: cysteine 271/cysteine 319 and cysteine 363/cysteine 412. 2 N-linked (GlcNAc...) asparagine glycosylation sites follow: asparagine 393 and asparagine 394. Fibronectin type-III domains follow at residues 438-532 (PPRN…TLGE) and 535-630 (VPPP…ASER). N-linked (GlcNAc...) asparagine glycans are attached at residues asparagine 592, asparagine 616, and asparagine 646. Residues 653 to 673 (IVIGIHIGVTCIIFCVLFLLF) traverse the membrane as a helical segment. Disordered stretches follow at residues 689-724 (LSPP…EKPV) and 775-813 (TTEA…AAPQ).

It belongs to the immunoglobulin superfamily. DCC family. As to expression, detected in cerebellum, kidney, heart, lung, skeletal muscle and spleen.

Its subcellular location is the membrane. In Mus musculus (Mouse), this protein is Immunoglobulin superfamily DCC subclass member 3 (Igdcc3).